The following is a 101-amino-acid chain: MIPGEIKTDAGDLQLNVGCEQLTVTVANSGDRPIQVGSHYHFYEVNPALKFEREKCRGYRLDITSGTAVRFEPGQQRQVTLIAYRGKRRVFGFRASIQGDL.

Belongs to the urease beta subunit family. Heterotrimer of UreA (gamma), UreB (beta) and UreC (alpha) subunits. Three heterotrimers associate to form the active enzyme.

It localises to the cytoplasm. It catalyses the reaction urea + 2 H2O + H(+) = hydrogencarbonate + 2 NH4(+). Its pathway is nitrogen metabolism; urea degradation; CO(2) and NH(3) from urea (urease route): step 1/1. This is Urease subunit beta from Psychromonas ingrahamii (strain DSM 17664 / CCUG 51855 / 37).